A 256-amino-acid polypeptide reads, in one-letter code: Major prion protein 2 (256 aa).

Positions Met1–Cys24 are cleaved as a signal peptide. An interaction with GRB2, ERI3 and SYN1 region spans residues Lys25–Ala233. The disordered stretch occupies residues Pro28 to Thr110. 5 tandem repeats follow at residues Pro54 to Gln62, Pro63 to Gln70, Pro71 to Gln78, Pro79 to Gln86, and Pro87 to Gln95. Residues Pro54–Gln95 form a 5 X 8 AA tandem repeats of P-H-G-G-G-W-G-Q region. Residues Gly58 to His99 show a composition bias toward gly residues. Residues His64, Gly65, Gly66, His72, Gly74, His80, Gly81, Gly82, His88, Gly90, and Gly91 each coordinate Cu(2+). Cysteines 182 and 217 form a disulfide. N-linked (GlcNAc...) asparagine glycans are attached at residues Asn184 and Asn200. Ala233 is lipidated: GPI-anchor amidated alanine. A propeptide spans Ser234–Gly256 (removed in mature form).

Belongs to the prion family. As to quaternary structure, monomer and homodimer. Has a tendency to aggregate into amyloid fibrils containing a cross-beta spine, formed by a steric zipper of superposed beta-strands. Soluble oligomers may represent an intermediate stage on the path to fibril formation. Copper binding may promote oligomerization. Interacts with GRB2, APP, ERI3/PRNPIP and SYN1. Mislocalized cytosolically exposed PrP interacts with MGRN1; this interaction alters MGRN1 subcellular location and causes lysosomal enlargement. Interacts with KIAA1191.

The protein resides in the cell membrane. The protein localises to the golgi apparatus. Its function is as follows. Its primary physiological function is unclear. Has cytoprotective activity against internal or environmental stresses. May play a role in neuronal development and synaptic plasticity. May be required for neuronal myelin sheath maintenance. May play a role in iron uptake and iron homeostasis. Soluble oligomers are toxic to cultured neuroblastoma cells and induce apoptosis (in vitro). Association with GPC1 (via its heparan sulfate chains) targets PRNP to lipid rafts. Also provides Cu(2+) or Zn(2+) for the ascorbate-mediated GPC1 deaminase degradation of its heparan sulfate side chains. The polypeptide is Major prion protein 2 (Tragelaphus strepsiceros (Greater kudu)).